Reading from the N-terminus, the 281-residue chain is 3-hydroxybutyryl-CoA dehydrogenase (281 aa).

Belongs to the 3-hydroxyacyl-CoA dehydrogenase family.

It carries out the reaction (3S)-3-hydroxybutanoyl-CoA + NADP(+) = acetoacetyl-CoA + NADPH + H(+). It functions in the pathway lipid metabolism; butanoate metabolism. This chain is 3-hydroxybutyryl-CoA dehydrogenase (hbd), found in Clostridioides difficile (Peptoclostridium difficile).